The sequence spans 94 residues: Co-chaperonin GroES (94 aa).

This sequence belongs to the GroES chaperonin family. In terms of assembly, heptamer of 7 subunits arranged in a ring. Interacts with the chaperonin GroEL.

The protein resides in the cytoplasm. Functionally, together with the chaperonin GroEL, plays an essential role in assisting protein folding. The GroEL-GroES system forms a nano-cage that allows encapsulation of the non-native substrate proteins and provides a physical environment optimized to promote and accelerate protein folding. GroES binds to the apical surface of the GroEL ring, thereby capping the opening of the GroEL channel. The sequence is that of Co-chaperonin GroES from Thermoanaerobacter pseudethanolicus (strain ATCC 33223 / 39E) (Clostridium thermohydrosulfuricum).